The primary structure comprises 480 residues: MKTAELIFVPLPETGHLLSTIEFGKRLLNLDRRISMITILSMNLPYAPHADASLASLTASEPGIRIISLPEIHDPPPIKLLDTSSETYILDFIHKNIPCLRKTIQDLVSSSSSSGGGSSHVAGLILDFFCVGLIDIGREVNLPSYIFMTSNFGFLGVLQYLPERQRLTPSEFDESSGEEELHIPAFVNRVPAKVLPPGVFDKLSYGSLVKIGERLHEAKGILVNSFTQVEPYAAEHFSQGRDYPHVYPVGPVLNLTGRTNPGLASAQYKEMMKWLDEQPDSSVLFLCFGSMGVFPAPQITEIAHALELIGCRFIWAIRTNMAGDGDPQEPLPEGFVDRTMGRGIVCSWAPQVDILAHKATGGFVSHCGWNSVQESLWYGVPIATWPMYAEQQLNAFEMVKELGLAVEIRLDYVADGDRVTLEIVSADEIATAVRSLMDSDNPVRKKVIEKSSVARKAVGDGGSSTVATCNFIKDILGDHF.

Residues Ser290, 349 to 351 (APQ), 366 to 374 (HCGWNSVQE), and 388 to 391 (YAEQ) contribute to the UDP-alpha-D-glucose site.

This sequence belongs to the UDP-glycosyltransferase family.

In terms of biological role, possesses low quercetin 3-O-glucosyltransferase activity in vitro. The protein is UDP-glycosyltransferase 71C5 (UGT71C5) of Arabidopsis thaliana (Mouse-ear cress).